The sequence spans 326 residues: Nitrogen metabolite regulation-like protein bik4 (326 aa).

Residues 13–18 (GATGEV) and 161–164 (FASN) each bind NADP(+).

It belongs to the NmrA-type oxidoreductase family.

In terms of biological role, nitrogen metabolite regulation-like protein involved in the regulation of the gene cluster that mediates the biosynthesis of bikaverin, a red pigment also considered as a mycotoxin. The chain is Nitrogen metabolite regulation-like protein bik4 from Gibberella fujikuroi (strain CBS 195.34 / IMI 58289 / NRRL A-6831) (Bakanae and foot rot disease fungus).